A 637-amino-acid polypeptide reads, in one-letter code: Threonine--tRNA ligase (637 aa).

Residues 1-61 (MPNVKLPDGN…KEDCSLIIVT (61 aa)) form the TGS domain. The catalytic stretch occupies residues 242 to 533 (DHRKLGKALD…LIEHYAGKLP (292 aa)). Zn(2+)-binding residues include Cys333, His384, and His510.

Belongs to the class-II aminoacyl-tRNA synthetase family. As to quaternary structure, homodimer. The cofactor is Zn(2+).

The protein resides in the cytoplasm. It catalyses the reaction tRNA(Thr) + L-threonine + ATP = L-threonyl-tRNA(Thr) + AMP + diphosphate + H(+). Catalyzes the attachment of threonine to tRNA(Thr) in a two-step reaction: L-threonine is first activated by ATP to form Thr-AMP and then transferred to the acceptor end of tRNA(Thr). Also edits incorrectly charged L-seryl-tRNA(Thr). This chain is Threonine--tRNA ligase, found in Legionella pneumophila (strain Paris).